We begin with the raw amino-acid sequence, 396 residues long: Ribosomal RNA large subunit methyltransferase I (396 aa).

In terms of domain architecture, PUA spans 2 to 79; that stretch reads SIRIKLKPGR…KEEAIDRDFF (78 aa).

The protein belongs to the methyltransferase superfamily. RlmI family.

The protein localises to the cytoplasm. The catalysed reaction is cytidine(1962) in 23S rRNA + S-adenosyl-L-methionine = 5-methylcytidine(1962) in 23S rRNA + S-adenosyl-L-homocysteine + H(+). Its function is as follows. Specifically methylates the cytosine at position 1962 (m5C1962) of 23S rRNA. This Shewanella amazonensis (strain ATCC BAA-1098 / SB2B) protein is Ribosomal RNA large subunit methyltransferase I.